Here is a 526-residue protein sequence, read N- to C-terminus: Lysine--tRNA ligase (526 aa).

The short motif at 44–52 is the 'HIGH' region element; that stretch reads PSGLPHIGT. The 'KMSKS' region motif lies at 290–294; sequence KISKS. Lys-293 is a binding site for ATP.

It belongs to the class-I aminoacyl-tRNA synthetase family.

It is found in the cytoplasm. It catalyses the reaction tRNA(Lys) + L-lysine + ATP = L-lysyl-tRNA(Lys) + AMP + diphosphate. This chain is Lysine--tRNA ligase, found in Rickettsia typhi (strain ATCC VR-144 / Wilmington).